A 224-amino-acid polypeptide reads, in one-letter code: Glutathione S-transferase Mu 5 (224 aa).

Residues 4–91 enclose the GST N-terminal domain; the sequence is KSMVLGYWDI…YIARKHNMCG (88 aa). A Phosphoserine modification is found at S5. Residues 10-11, 49-53, 62-63, and 75-76 each bind glutathione; these read YW, WLDVK, NL, and QS. The 119-residue stretch at 93–211 folds into the GST C-terminal domain; it reads TEEEKIRVDI…QSDRFFKMPI (119 aa). Y119 provides a ligand contact to substrate.

Belongs to the GST superfamily. Mu family. Homodimer. Interacts with PFKM isoform 2 and isoform 3 (via N-terminal testis-specific region).

It localises to the cytoplasm. It catalyses the reaction RX + glutathione = an S-substituted glutathione + a halide anion + H(+). Its function is as follows. Conjugation of reduced glutathione to a wide number of exogenous and endogenous hydrophobic electrophiles. This chain is Glutathione S-transferase Mu 5 (Gstm5), found in Mus musculus (Mouse).